The primary structure comprises 1048 residues: 3-hydroxy-3-methylglutaryl-coenzyme A reductase (1048 aa).

The Cytoplasmic portion of the chain corresponds to 1 to 32 (MDPVVKKPSPGGVQHRVTKGLRAIVGHACRHP). A helical transmembrane segment spans residues 33 to 53 (IHTLLVTALTAATTHLHVLEG). Residues 54–220 (TYQAAHRGLA…FLHRVKHAET (167 aa)) lie on the Lumenal side of the membrane. Residues 221–241 (VDLVIIGLSYLAMNMTVVSLF) traverse the membrane as a helical segment. The 182-residue stretch at 222–403 (DLVIIGLSYL…FTFYATILCV (182 aa)) folds into the SSD domain. The Cytoplasmic portion of the chain corresponds to 242 to 250 (RVMRQLGSR). The helical transmembrane segment at 251–271 (FWLATSVLLSGAFAFVLGLGI) threads the bilayer. Topologically, residues 272-276 (TTTCD) are lumenal. A helical transmembrane segment spans residues 277 to 297 (VPVDMLLLFEGIPYLVLTVGF). The Cytoplasmic segment spans residues 298-348 (EKPIQLTRAVLCVSEELRGGWQRPVPNGASSDDSRQSQLIPNIIQLAVDRE). A helical membrane pass occupies residues 349-369 (GWYIVRSYLLEIGALALGAVL). Topologically, residues 370–377 (RPNDSLGH) are lumenal. The N-linked (GlcNAc...) asparagine glycan is linked to Asn-372. Residues 378–398 (FCFLAAWTLLIDAILLFTFYA) form a helical membrane-spanning segment. The Cytoplasmic portion of the chain corresponds to 399–439 (TILCVKLEITRIRSPGGLGQVNAKHPSGIFGHKVKSTNITW). The helical transmembrane segment at 440-460 (WKLLTVGGFVLCHFLQLSPFF) threads the bilayer. The Lumenal segment spans residues 461-542 (YRVMGEYMAN…LDGLESPLGR (82 aa)). N-linked (GlcNAc...) asparagine glycans are attached at residues Asn-470 and Asn-520. Residues 543-563 (LCLMGALVVSLVLNNHLIHAA) traverse the membrane as a helical segment. Over 564–1048 (RWHAWPQARE…NRSAGATVKK (485 aa)) the chain is Cytoplasmic. The Charge relay system role is filled by Glu-729. 735–741 (SASRGCK) contributes to the CoA binding site. Residues 796 to 798 (SRF) and 823 to 831 (DAMGMNMIS) each bind NADP(+). The active-site Charge relay system is Lys-863. 892–894 (VLK) lines the CoA pocket. Catalysis depends on Asp-939, which acts as the Charge relay system. 1034–1035 (AH) contributes to the CoA binding site. The active-site Proton donor is the His-1035. An NADP(+)-binding site is contributed by 1039-1040 (NR).

The protein belongs to the HMG-CoA reductase family.

The protein localises to the endoplasmic reticulum membrane. The enzyme catalyses (R)-mevalonate + 2 NADP(+) + CoA = (3S)-3-hydroxy-3-methylglutaryl-CoA + 2 NADPH + 2 H(+). The protein operates within metabolic intermediate biosynthesis; (R)-mevalonate biosynthesis; (R)-mevalonate from acetyl-CoA: step 3/3. HMG-CoA reductase; part of the first module of ergosterol biosynthesis pathway that includes the early steps of the pathway, conserved across all eukaryotes, and which results in the formation of mevalonate from acetyl-coenzyme A (acetyl-CoA). In this module, the cytosolic acetyl-CoA acetyltransferase catalyzes the formation of acetoacetyl-CoA. The hydroxymethylglutaryl-CoA synthase then condenses acetyl-CoA with acetoacetyl-CoA to form HMG-CoA. The rate-limiting step of the early module is the reduction to mevalonate by the 3-hydroxy-3-methylglutaryl-coenzyme A (HMG-CoA) reductase. This chain is 3-hydroxy-3-methylglutaryl-coenzyme A reductase, found in Aspergillus terreus (strain NIH 2624 / FGSC A1156).